The sequence spans 175 residues: Thioredoxin M3, chloroplastic (175 aa).

A chloroplast-targeting transit peptide spans 1 to 59 (MAATATACPAPPPPRSLYRGVALAAPGRRRAGYGASSSAARRWPGCRRRWAAHRIRTVS). The region spanning 61 to 171 (AYSPRGAKTI…YVRAIEKSIS (111 aa)) is the Thioredoxin domain. Active-site nucleophile residues include Cys-95 and Cys-98. The cysteines at positions 95 and 98 are disulfide-linked.

The protein belongs to the thioredoxin family. Plant M-type subfamily.

Its subcellular location is the plastid. It is found in the chloroplast. In terms of biological role, probable thiol-disulfide oxidoreductase that may be involved in the redox regulation of chloroplastic enzymes. This chain is Thioredoxin M3, chloroplastic, found in Oryza sativa subsp. japonica (Rice).